Here is a 341-residue protein sequence, read N- to C-terminus: MKALAKLKAEEGIWMTNVPQPELGHNDIMIKIRKTAICGTDVHIYNWDEWSQKTIPVPMVVGHEYVGEVVAIGQEVKGFNIGDRVSGEGHITCGHCRNCRGGRTHLCRNTVGVGVNRPGSFAEYLVIPAFNAFKIPDNISDELAAIFDPFGNAVHTALSFDLVGEDVLVSGAGPIGIMAAAVCKHVGARHVVITDVNEYRLDLARKMGVTRAVNVNKENLNDVMAELGMTEGFDVGLEMSGAPPAFRALLNSMNHGGRIAMLGIPPSDMSIDWNQVIFKGLFIKGIYGREMFETWYKMAALIQSGLDLTPIITHRFSIDEFQQGFDAMRSGKSGKVILNWD.

Cys-38 serves as a coordination point for Zn(2+). Catalysis depends on charge relay system residues Thr-40 and His-43. Residues His-63, Glu-64, Cys-93, Cys-96, Cys-99, and Cys-107 each coordinate Zn(2+). Residues Ile-175, Asp-195, Arg-200, Leu-262–Ile-264, and Ile-286–Tyr-287 each bind NAD(+).

It belongs to the zinc-containing alcohol dehydrogenase family. As to quaternary structure, homotetramer. It depends on Zn(2+) as a cofactor.

It localises to the cytoplasm. The catalysed reaction is L-threonine + NAD(+) = (2S)-2-amino-3-oxobutanoate + NADH + H(+). It functions in the pathway amino-acid degradation; L-threonine degradation via oxydo-reductase pathway; glycine from L-threonine: step 1/2. Its function is as follows. Catalyzes the NAD(+)-dependent oxidation of L-threonine to 2-amino-3-ketobutyrate. This is L-threonine 3-dehydrogenase from Yersinia enterocolitica serotype O:8 / biotype 1B (strain NCTC 13174 / 8081).